Consider the following 295-residue polypeptide: Porphobilinogen deaminase (295 aa).

C241 bears the S-(dipyrrolylmethanemethyl)cysteine mark.

Belongs to the HMBS family. In terms of assembly, monomer. Dipyrromethane serves as cofactor.

It catalyses the reaction 4 porphobilinogen + H2O = hydroxymethylbilane + 4 NH4(+). The protein operates within porphyrin-containing compound metabolism; protoporphyrin-IX biosynthesis; coproporphyrinogen-III from 5-aminolevulinate: step 2/4. Functionally, tetrapolymerization of the monopyrrole PBG into the hydroxymethylbilane pre-uroporphyrinogen in several discrete steps. The sequence is that of Porphobilinogen deaminase from Lachnospira eligens (strain ATCC 27750 / DSM 3376 / VPI C15-48 / C15-B4) (Eubacterium eligens).